Here is a 207-residue protein sequence, read N- to C-terminus: ATP synthase subunit b 2 (207 aa).

The chain crosses the membrane as a helical span at residues 58–78 (LLWLVITFGVFYLLMQKVIAP).

Belongs to the ATPase B chain family. As to quaternary structure, F-type ATPases have 2 components, F(1) - the catalytic core - and F(0) - the membrane proton channel. F(1) has five subunits: alpha(3), beta(3), gamma(1), delta(1), epsilon(1). F(0) has three main subunits: a(1), b(2) and c(10-14). The alpha and beta chains form an alternating ring which encloses part of the gamma chain. F(1) is attached to F(0) by a central stalk formed by the gamma and epsilon chains, while a peripheral stalk is formed by the delta and b chains.

The protein resides in the cell inner membrane. In terms of biological role, f(1)F(0) ATP synthase produces ATP from ADP in the presence of a proton or sodium gradient. F-type ATPases consist of two structural domains, F(1) containing the extramembraneous catalytic core and F(0) containing the membrane proton channel, linked together by a central stalk and a peripheral stalk. During catalysis, ATP synthesis in the catalytic domain of F(1) is coupled via a rotary mechanism of the central stalk subunits to proton translocation. Its function is as follows. Component of the F(0) channel, it forms part of the peripheral stalk, linking F(1) to F(0). The b'-subunit is a diverged and duplicated form of b found in plants and photosynthetic bacteria. The chain is ATP synthase subunit b 2 (atpF2) from Rhizobium johnstonii (strain DSM 114642 / LMG 32736 / 3841) (Rhizobium leguminosarum bv. viciae).